A 90-amino-acid polypeptide reads, in one-letter code: uncharacterized protein (90 aa).

This is an uncharacterized protein from Escherichia coli (Bacteriophage T3).